The chain runs to 878 residues: Leucine--tRNA ligase (878 aa).

Residues 56 to 66 (PYPSGKLHMGH) carry the 'HIGH' region motif. Residues 630-634 (KMSKS) carry the 'KMSKS' region motif. Position 633 (lysine 633) interacts with ATP.

Belongs to the class-I aminoacyl-tRNA synthetase family.

It is found in the cytoplasm. It carries out the reaction tRNA(Leu) + L-leucine + ATP = L-leucyl-tRNA(Leu) + AMP + diphosphate. This chain is Leucine--tRNA ligase, found in Prochlorococcus marinus (strain MIT 9313).